A 213-amino-acid polypeptide reads, in one-letter code: Orotate phosphoribosyltransferase (213 aa).

Lys26 contributes to the 5-phospho-alpha-D-ribose 1-diphosphate binding site. 34 to 35 (FF) serves as a coordination point for orotate. 5-phospho-alpha-D-ribose 1-diphosphate is bound by residues 72-73 (YK), Arg99, Lys100, Lys103, His105, and 124-132 (DDVITAGTA). Positions 128 and 156 each coordinate orotate.

Belongs to the purine/pyrimidine phosphoribosyltransferase family. PyrE subfamily. Homodimer. Mg(2+) is required as a cofactor.

The catalysed reaction is orotidine 5'-phosphate + diphosphate = orotate + 5-phospho-alpha-D-ribose 1-diphosphate. It participates in pyrimidine metabolism; UMP biosynthesis via de novo pathway; UMP from orotate: step 1/2. Functionally, catalyzes the transfer of a ribosyl phosphate group from 5-phosphoribose 1-diphosphate to orotate, leading to the formation of orotidine monophosphate (OMP). The sequence is that of Orotate phosphoribosyltransferase from Pseudomonas paraeruginosa (strain DSM 24068 / PA7) (Pseudomonas aeruginosa (strain PA7)).